A 437-amino-acid chain; its full sequence is Probable glycine dehydrogenase (decarboxylating) subunit 1 (437 aa).

It belongs to the GcvP family. N-terminal subunit subfamily. As to quaternary structure, the glycine cleavage system is composed of four proteins: P, T, L and H. In this organism, the P 'protein' is a heterodimer of two subunits.

The catalysed reaction is N(6)-[(R)-lipoyl]-L-lysyl-[glycine-cleavage complex H protein] + glycine + H(+) = N(6)-[(R)-S(8)-aminomethyldihydrolipoyl]-L-lysyl-[glycine-cleavage complex H protein] + CO2. The glycine cleavage system catalyzes the degradation of glycine. The P protein binds the alpha-amino group of glycine through its pyridoxal phosphate cofactor; CO(2) is released and the remaining methylamine moiety is then transferred to the lipoamide cofactor of the H protein. This Thermotoga maritima (strain ATCC 43589 / DSM 3109 / JCM 10099 / NBRC 100826 / MSB8) protein is Probable glycine dehydrogenase (decarboxylating) subunit 1.